The primary structure comprises 315 residues: Protoheme IX farnesyltransferase 1 (315 aa).

A run of 9 helical transmembrane segments spans residues P25–G45, L49–V69, R87–G107, A120–L139, S145–C165, A176–F196, L220–G240, T242–L262, and G280–I300.

The protein belongs to the UbiA prenyltransferase family. Protoheme IX farnesyltransferase subfamily.

It is found in the cell inner membrane. The catalysed reaction is heme b + (2E,6E)-farnesyl diphosphate + H2O = Fe(II)-heme o + diphosphate. Its pathway is porphyrin-containing compound metabolism; heme O biosynthesis; heme O from protoheme: step 1/1. Functionally, converts heme B (protoheme IX) to heme O by substitution of the vinyl group on carbon 2 of heme B porphyrin ring with a hydroxyethyl farnesyl side group. This is Protoheme IX farnesyltransferase 1 from Shewanella sp. (strain W3-18-1).